The chain runs to 241 residues: Ribonuclease 3 (241 aa).

Residues H16–G144 form the RNase III domain. E57 contributes to the Mg(2+) binding site. Catalysis depends on residues D61 and E133. Mg(2+) is bound at residue E133. A DRBM domain is found at D171 to S240.

Belongs to the ribonuclease III family. Homodimer. Mg(2+) serves as cofactor.

Its subcellular location is the cytoplasm. It carries out the reaction Endonucleolytic cleavage to 5'-phosphomonoester.. Functionally, digests double-stranded RNA. Involved in the processing of primary rRNA transcript to yield the immediate precursors to the large and small rRNAs (23S and 16S). Processes some mRNAs, and tRNAs when they are encoded in the rRNA operon. Processes pre-crRNA and tracrRNA of type II CRISPR loci if present in the organism. The sequence is that of Ribonuclease 3 from Desulfotalea psychrophila (strain LSv54 / DSM 12343).